Consider the following 1038-residue polypeptide: GTPase-activating Rap/Ran-GAP domain-like protein 3 (1038 aa).

Phosphoserine is present on residues lysine 6 and serine 68. The 217-residue stretch at leucine 214–leucine 430 folds into the Rap-GAP domain. A phosphoserine mark is found at serine 449 and serine 455. Residues proline 512–tyrosine 824 enclose the CNH domain. Disordered stretches follow at residues glutamate 833–serine 863 and leucine 937–lysine 1038. A Phosphothreonine modification is found at threonine 851. The span at serine 1019–alanine 1028 shows a compositional bias: polar residues.

The protein belongs to the GARNL3 family.

This Mus musculus (Mouse) protein is GTPase-activating Rap/Ran-GAP domain-like protein 3 (Garnl3).